A 504-amino-acid chain; its full sequence is Maturase K (504 aa).

The protein belongs to the intron maturase 2 family. MatK subfamily.

The protein localises to the plastid. Its subcellular location is the chloroplast. Functionally, usually encoded in the trnK tRNA gene intron. Probably assists in splicing its own and other chloroplast group II introns. The chain is Maturase K from Prionotes cerinthoides (Climbing heath).